The following is a 429-amino-acid chain: 3-phosphoshikimate 1-carboxyvinyltransferase (429 aa).

The 3-phosphoshikimate site is built by Lys20, Ser21, and Arg25. Lys20 contributes to the phosphoenolpyruvate binding site. Residues Gly89 and Arg118 each coordinate phosphoenolpyruvate. 3-phosphoshikimate-binding residues include Ser164, Ser165, Gln166, Ser192, Asp311, and Lys338. Gln166 contacts phosphoenolpyruvate. Asp311 serves as the catalytic Proton acceptor. Residues Arg342 and Arg384 each coordinate phosphoenolpyruvate.

Belongs to the EPSP synthase family. Monomer.

It is found in the cytoplasm. It carries out the reaction 3-phosphoshikimate + phosphoenolpyruvate = 5-O-(1-carboxyvinyl)-3-phosphoshikimate + phosphate. Its pathway is metabolic intermediate biosynthesis; chorismate biosynthesis. Catalyzes the transfer of the enolpyruvyl moiety of phosphoenolpyruvate (PEP) to the 5-hydroxyl of shikimate-3-phosphate (S3P) to produce enolpyruvyl shikimate-3-phosphate and inorganic phosphate. This chain is 3-phosphoshikimate 1-carboxyvinyltransferase, found in Methanococcus maripaludis (strain C5 / ATCC BAA-1333).